The following is a 211-amino-acid chain: Protein-L-isoaspartate O-methyltransferase (211 aa).

S62 is an active-site residue.

The protein belongs to the methyltransferase superfamily. L-isoaspartyl/D-aspartyl protein methyltransferase family.

The protein resides in the cytoplasm. It carries out the reaction [protein]-L-isoaspartate + S-adenosyl-L-methionine = [protein]-L-isoaspartate alpha-methyl ester + S-adenosyl-L-homocysteine. Its function is as follows. Catalyzes the methyl esterification of L-isoaspartyl residues in peptides and proteins that result from spontaneous decomposition of normal L-aspartyl and L-asparaginyl residues. It plays a role in the repair and/or degradation of damaged proteins. The sequence is that of Protein-L-isoaspartate O-methyltransferase from Shewanella amazonensis (strain ATCC BAA-1098 / SB2B).